A 599-amino-acid chain; its full sequence is Elongation factor 4 (599 aa).

One can recognise a tr-type G domain in the interval 5-187 (SHIRNFSIIA…RLVTTIPAPT (183 aa)). Residues 17-22 (DHGKST) and 134-137 (NKID) contribute to the GTP site.

This sequence belongs to the TRAFAC class translation factor GTPase superfamily. Classic translation factor GTPase family. LepA subfamily.

It localises to the cell inner membrane. The enzyme catalyses GTP + H2O = GDP + phosphate + H(+). In terms of biological role, required for accurate and efficient protein synthesis under certain stress conditions. May act as a fidelity factor of the translation reaction, by catalyzing a one-codon backward translocation of tRNAs on improperly translocated ribosomes. Back-translocation proceeds from a post-translocation (POST) complex to a pre-translocation (PRE) complex, thus giving elongation factor G a second chance to translocate the tRNAs correctly. Binds to ribosomes in a GTP-dependent manner. The chain is Elongation factor 4 from Pseudomonas fluorescens (strain ATCC BAA-477 / NRRL B-23932 / Pf-5).